The primary structure comprises 275 residues: Nitrogenase iron protein 3 (275 aa).

Residue 9–16 (GKGGIGKS) coordinates ATP. Cys97 contributes to the [4Fe-4S] cluster binding site. Arg100 carries the ADP-ribosylarginine; by dinitrogenase reductase ADP-ribosyltransferase modification. [4Fe-4S] cluster is bound at residue Cys132.

This sequence belongs to the NifH/BchL/ChlL family. Homodimer. [4Fe-4S] cluster serves as cofactor. In terms of processing, the reversible ADP-ribosylation of Arg-100 inactivates the nitrogenase reductase and regulates nitrogenase activity.

It carries out the reaction N2 + 8 reduced [2Fe-2S]-[ferredoxin] + 16 ATP + 16 H2O = H2 + 8 oxidized [2Fe-2S]-[ferredoxin] + 2 NH4(+) + 16 ADP + 16 phosphate + 6 H(+). Its function is as follows. The key enzymatic reactions in nitrogen fixation are catalyzed by the nitrogenase complex, which has 2 components: the iron protein (component 2) and a component 1 which is either a molybdenum-iron protein, a vanadium-iron, or an iron-iron protein. In Azotobacter vinelandii, this protein is Nitrogenase iron protein 3 (anfH).